The following is a 331-amino-acid chain: Glyceraldehyde-3-phosphate dehydrogenase 2 (331 aa).

Residues 11–12 (RI), Asp-33, and Arg-78 each bind NAD(+). Residues 148 to 150 (SCT), Thr-179, 208 to 209 (TG), and Arg-231 contribute to the D-glyceraldehyde 3-phosphate site. Cys-149 (nucleophile) is an active-site residue. Residue Asn-313 participates in NAD(+) binding.

Belongs to the glyceraldehyde-3-phosphate dehydrogenase family. As to quaternary structure, homotetramer.

The protein resides in the cytoplasm. The catalysed reaction is D-glyceraldehyde 3-phosphate + phosphate + NAD(+) = (2R)-3-phospho-glyceroyl phosphate + NADH + H(+). The protein operates within carbohydrate degradation; glycolysis; pyruvate from D-glyceraldehyde 3-phosphate: step 1/5. The chain is Glyceraldehyde-3-phosphate dehydrogenase 2 (GAP2) from Kluyveromyces marxianus (Yeast).